A 223-amino-acid chain; its full sequence is Serum amyloid P-component (223 aa).

The N-terminal stretch at M1–A19 is a signal peptide. Positions D24–D223 constitute a Pentraxin (PTX) domain. C55 and C114 are oxidised to a cystine. Ca(2+) contacts are provided by D77, N78, E155, Q156, D157, and Q167. N-linked (GlcNAc...) asparagine glycosylation occurs at N198.

The protein belongs to the pentraxin family. In terms of assembly, homopentamer. Pentraxin (or pentaxin) have a discoid arrangement of 5 non-covalently bound subunits. The cofactor is Ca(2+).

It is found in the secreted. This chain is Serum amyloid P-component (PTX2), found in Cavia porcellus (Guinea pig).